A 716-amino-acid polypeptide reads, in one-letter code: Eosinophil peroxidase (716 aa).

Residues 1–18 form the signal peptide; that stretch reads MMQQLLALVGALATLILT. Residues 19–140 constitute a propeptide that is removed on maturation; it reads QHAEGTAPAS…SGCALQDQAE (122 aa). N-linked (GlcNAc...) asparagine glycosylation is found at Asn53 and Asn114. Cys142 and Cys153 are disulfide-bonded. Asp233 is a binding site for heme b. His234 (proton acceptor) is an active-site residue. Asp235 is a binding site for Ca(2+). 2 disulfides stabilise this stretch: Cys254/Cys264 and Cys258/Cys282. Ca(2+) contacts are provided by Thr307, Phe309, Asp311, and Ser313. Residues Asn328 and Asn364 are each glycosylated (N-linked (GlcNAc...) asparagine). Cys360 and Cys371 form a disulfide bridge. Residues Glu381 and His475 each coordinate heme b. The residue at position 489 (Tyr489) is a 3'-nitrotyrosine. 2 cysteine pairs are disulfide-bonded: Cys579–Cys636 and Cys677–Cys702. N-linked (GlcNAc...) asparagine glycosylation occurs at Asn709.

The protein belongs to the peroxidase family. XPO subfamily. In terms of assembly, tetramer of two light chains and two heavy chains. Ca(2+) serves as cofactor. It depends on heme b as a cofactor.

Its subcellular location is the cytoplasmic granule. The catalysed reaction is 2 a phenolic donor + H2O2 = 2 a phenolic radical donor + 2 H2O. Functionally, mediates tyrosine nitration of secondary granule proteins in mature resting eosinophils. This chain is Eosinophil peroxidase (Epx), found in Mus musculus (Mouse).